We begin with the raw amino-acid sequence, 560 residues long: DNA ligase B (560 aa).

The active-site N6-AMP-lysine intermediate is the Lys-128.

It belongs to the NAD-dependent DNA ligase family. LigB subfamily.

It carries out the reaction NAD(+) + (deoxyribonucleotide)n-3'-hydroxyl + 5'-phospho-(deoxyribonucleotide)m = (deoxyribonucleotide)n+m + AMP + beta-nicotinamide D-nucleotide.. Catalyzes the formation of phosphodiester linkages between 5'-phosphoryl and 3'-hydroxyl groups in double-stranded DNA using NAD as a coenzyme and as the energy source for the reaction. The sequence is that of DNA ligase B from Azotobacter vinelandii (strain DJ / ATCC BAA-1303).